The primary structure comprises 638 residues: LEAF RUST 10 DISEASE-RESISTANCE LOCUS RECEPTOR-LIKE PROTEIN KINASE-like 2.1 (638 aa).

The first 29 residues, 1 to 29 (MINLSLYQTNSLSYTIIWMLFVIPSCVLS), serve as a signal peptide directing secretion. Residues 30 to 264 (VDERQKHCSP…EHTCGKMGIG (235 aa)) lie on the Extracellular side of the membrane. Asn69, Asn114, Asn136, Asn204, and Asn239 each carry an N-linked (GlcNAc...) asparagine glycan. A helical membrane pass occupies residues 265 to 285 (IGLGCGFLGATLITVCLLCFF). At 286–638 (FQKRRTSHHL…YTEVFIGSTS (353 aa)) the chain is on the cytoplasmic side. One can recognise a Protein kinase domain in the interval 321-609 (KLFSHTLGKG…VLEVPPKPSI (289 aa)). ATP-binding positions include 327–335 (LGKGGFGTV) and Lys349. Position 393 is a phosphotyrosine (Tyr393). The active-site Proton acceptor is the Asp444. Position 484 is a phosphothreonine (Thr484).

This sequence belongs to the protein kinase superfamily. Ser/Thr protein kinase family.

Its subcellular location is the membrane. The catalysed reaction is L-seryl-[protein] + ATP = O-phospho-L-seryl-[protein] + ADP + H(+). It catalyses the reaction L-threonyl-[protein] + ATP = O-phospho-L-threonyl-[protein] + ADP + H(+). This chain is LEAF RUST 10 DISEASE-RESISTANCE LOCUS RECEPTOR-LIKE PROTEIN KINASE-like 2.1, found in Arabidopsis thaliana (Mouse-ear cress).